Here is a 292-residue protein sequence, read N- to C-terminus: S-adenosyl-L-methionine-dependent Diels-Alderase iccD (292 aa).

A helical transmembrane segment spans residues 240–262 (LPVVRMFYVVLLVPYLFVRLLGI).

It belongs to the class I-like SAM-binding methyltransferase superfamily. Erg6/SMT family. S-adenosyl-L-methionine serves as cofactor.

The protein resides in the membrane. It catalyses the reaction 3-[(2E,4E,8S,10E,12Z)-4,8-dimethyltetradeca-2,4,10,12-tetraenoyl]-4-hydroxy-5-(4-hydroxyphenyl)-1,2-dihydropyridin-2-one = 8-epi-ilicicolin H. The protein operates within mycotoxin biosynthesis. Its function is as follows. S-adenosyl-l-methionine-dependent Diels-Alderase; part of the gene cluster that mediates the biosynthesis of ilicicolin H, a 4-hydroxy-2-pyridonealkaloid that has potent and broad antifungal activities by inhibiting the mitochondrial respiration chain. IccD catalyzes the Diels-Alder reaction that converts the acyclic 2-pyridone intermediate to 8-epi-ilicicolin H. The biosynthesis of ilicicolin H starts with formation of the tetramic acid by the hybrid PKS-NRPS synthetase iccA with the partnering trans-enoyl reductase iccB since iccA lacks a designated enoylreductase (ER) domain. The cytochrome P450 monooxygenase iccC then catalyzes the ring expansion of the tetramate to the acyclic 2-pyridone. The pericyclase iccD further converts the acyclic 2-pyridone into 8-epi-ilicicolin H. Finally, the epimerase iccE converts 8-epi-ilicicolin H into ilicicolin H via epimerization. IccA to iccE are sufficient for ilicicolin H biosynthesis and the roles of the remaining enzymes, iccF, iccG and iccH within the pathway have still to be determined. This chain is S-adenosyl-L-methionine-dependent Diels-Alderase iccD, found in Talaromyces variabilis (Penicillium variabile).